Here is a 199-residue protein sequence, read N- to C-terminus: Alpha-D-glucose 1-phosphate phosphatase YihX (199 aa).

Asp6 serves as the catalytic Nucleophile. Asp6 is a Mg(2+) binding site. Residues 6–8, 107–108, Lys141, and Asp166 each bind substrate; these read DLG and SN. Asp166 is a binding site for Mg(2+).

Belongs to the HAD-like hydrolase superfamily. YihX family. It depends on Mg(2+) as a cofactor. Mn(2+) is required as a cofactor. The cofactor is Co(2+). Zn(2+) serves as cofactor.

The catalysed reaction is alpha-D-glucose 1-phosphate + H2O = D-glucose + phosphate. Catalyzes the dephosphorylation of alpha-D-glucose 1-phosphate (Glc1P) and, to a lesser extent, of other sugar phosphates. Has no activity with the beta form of Glc1P. In addition, YihX has significant phosphatase activity against pyridoxal phosphate (PLP) and low beta-phosphoglucomutase activity. This chain is Alpha-D-glucose 1-phosphate phosphatase YihX (yihX), found in Escherichia coli (strain K12).